The primary structure comprises 372 residues: uncharacterized protein (372 aa).

An N-terminal signal peptide occupies residues 1-24 (MSYYQIIVCILASISYIILLEVIA). The PA domain occupies 92-215 (PNRNDTDASY…SSYNLLWSDL (124 aa)). Residues 236–256 (FWPFLLCFSPSIIMLITVQAL) traverse the membrane as a helical segment. S280 carries the post-translational modification Phosphoserine. The RING-type; atypical zinc finger occupies 321 to 363 (CVICLESFTKGDKVVALPCKHEFHRPCIAKWIVDYRHACPTCN).

It is found in the golgi apparatus membrane. Its subcellular location is the vacuole membrane. This is an uncharacterized protein from Schizosaccharomyces pombe (strain 972 / ATCC 24843) (Fission yeast).